The chain runs to 145 residues: D-aminoacyl-tRNA deacylase (145 aa).

Positions 137–138 match the Gly-cisPro motif, important for rejection of L-amino acids motif; the sequence is GP.

The protein belongs to the DTD family. Homodimer.

It localises to the cytoplasm. It catalyses the reaction glycyl-tRNA(Ala) + H2O = tRNA(Ala) + glycine + H(+). The catalysed reaction is a D-aminoacyl-tRNA + H2O = a tRNA + a D-alpha-amino acid + H(+). An aminoacyl-tRNA editing enzyme that deacylates mischarged D-aminoacyl-tRNAs. Also deacylates mischarged glycyl-tRNA(Ala), protecting cells against glycine mischarging by AlaRS. Acts via tRNA-based rather than protein-based catalysis; rejects L-amino acids rather than detecting D-amino acids in the active site. By recycling D-aminoacyl-tRNA to D-amino acids and free tRNA molecules, this enzyme counteracts the toxicity associated with the formation of D-aminoacyl-tRNA entities in vivo and helps enforce protein L-homochirality. The protein is D-aminoacyl-tRNA deacylase of Streptomyces avermitilis (strain ATCC 31267 / DSM 46492 / JCM 5070 / NBRC 14893 / NCIMB 12804 / NRRL 8165 / MA-4680).